The primary structure comprises 532 residues: Membrane protein insertase YidC (532 aa).

6 helical membrane-spanning segments follow: residues 6-26 (IVLAIILSLVVFLGWHSFAEY), 317-337 (AIDFGMFSIIAKPLLTALTFF), 342-362 (GNWGVAIIVLTLCIKIVFWPL), 411-431 (GGCLPILLQIPVFIGLYQALL), 451-473 (VWLADLSAADPFYITPLLMGASM), and 496-516 (PIIFTVMFLNFPAGLVIYWLF).

The protein belongs to the OXA1/ALB3/YidC family. Type 1 subfamily. In terms of assembly, interacts with the Sec translocase complex via SecD. Specifically interacts with transmembrane segments of nascent integral membrane proteins during membrane integration.

It is found in the cell membrane. In terms of biological role, required for the insertion and/or proper folding and/or complex formation of integral membrane proteins into the membrane. Involved in integration of membrane proteins that insert both dependently and independently of the Sec translocase complex, as well as at least some lipoproteins. Aids folding of multispanning membrane proteins. The protein is Membrane protein insertase YidC of Lawsonia intracellularis (strain PHE/MN1-00).